The chain runs to 92 residues: uncharacterized protein (92 aa).

Residues 1-92 (MNGNKDAIFK…LKNLLKGWIE (92 aa)) enclose the HTH arsR-type domain. A DNA-binding region (H-T-H motif) is located at residues 37–61 (IRLITKYDLSITRQAIAKHLSVLED).

This is an uncharacterized protein from Bacillus subtilis (strain 168).